We begin with the raw amino-acid sequence, 210 residues long: Large ribosomal subunit protein bL9 (210 aa).

Positions 172-210 (EAAAAALEPDSEEEFEAATPPSELAAEASDEDADDAKEA) are disordered. Positions 199 to 210 (ASDEDADDAKEA) are enriched in acidic residues.

It belongs to the bacterial ribosomal protein bL9 family.

Binds to the 23S rRNA. The protein is Large ribosomal subunit protein bL9 of Sphingopyxis alaskensis (strain DSM 13593 / LMG 18877 / RB2256) (Sphingomonas alaskensis).